A 377-amino-acid chain; its full sequence is Chaperone protein DnaJ (377 aa).

A J domain is found at 5-70; it reads DYYELLGLQK…EKKAKYDQFG (66 aa). A CR-type zinc finger spans residues 137-219; the sequence is GVEKEISVTR…CRGKGSVRKT (83 aa). Zn(2+) contacts are provided by C150, C153, C167, C170, C193, C196, C207, and C210. 4 CXXCXGXG motif repeats span residues 150–157, 167–174, 193–200, and 207–214; these read CEHCHGSG, CPTCSGSG, CDTCRGTG, and CSECRGKG.

It belongs to the DnaJ family. As to quaternary structure, homodimer. The cofactor is Zn(2+).

It localises to the cytoplasm. In terms of biological role, participates actively in the response to hyperosmotic and heat shock by preventing the aggregation of stress-denatured proteins and by disaggregating proteins, also in an autonomous, DnaK-independent fashion. Unfolded proteins bind initially to DnaJ; upon interaction with the DnaJ-bound protein, DnaK hydrolyzes its bound ATP, resulting in the formation of a stable complex. GrpE releases ADP from DnaK; ATP binding to DnaK triggers the release of the substrate protein, thus completing the reaction cycle. Several rounds of ATP-dependent interactions between DnaJ, DnaK and GrpE are required for fully efficient folding. Also involved, together with DnaK and GrpE, in the DNA replication of plasmids through activation of initiation proteins. The protein is Chaperone protein DnaJ of Clostridium beijerinckii (strain ATCC 51743 / NCIMB 8052) (Clostridium acetobutylicum).